The chain runs to 585 residues: Arginine--tRNA ligase (585 aa).

A 'HIGH' region motif is present at residues 131–141 (ANPTGPMHVGH).

The protein belongs to the class-I aminoacyl-tRNA synthetase family. In terms of assembly, monomer.

It is found in the cytoplasm. It catalyses the reaction tRNA(Arg) + L-arginine + ATP = L-arginyl-tRNA(Arg) + AMP + diphosphate. The sequence is that of Arginine--tRNA ligase from Brucella suis (strain ATCC 23445 / NCTC 10510).